Consider the following 90-residue polypeptide: [Phe8]-phyllolitorin (90 aa).

Positions 1–30 (MSAVPFTRVLLISGFLAHLLLSTFVTLTVC) are cleaved as a signal peptide. Positions 31 to 48 (KEVTEESDDLSKRNVLQR) are excised as a propeptide. Pyrrolidone carboxylic acid is present on Gln-49. The residue at position 57 (Met-57) is a Methionine amide. Residues 61–90 (SLENTNRRSDEDMEISALFRGSPLKVKRSD) constitute a propeptide that is removed on maturation.

It belongs to the bombesin/neuromedin-B/ranatensin family. Expressed by the skin glands.

The protein resides in the secreted. In Phyllomedusa sauvagei (Sauvage's leaf frog), this protein is [Phe8]-phyllolitorin.